We begin with the raw amino-acid sequence, 201 residues long: Protease (201 aa).

Catalysis depends on residues His-55, Asp-72, and Cys-122.

This sequence belongs to the peptidase C5 family. In terms of assembly, interacts with protease cofactor pVI-C; this interaction is necessary for protease activation.

Its subcellular location is the virion. It is found in the host nucleus. The catalysed reaction is Cleaves proteins of the adenovirus and its host cell at two consensus sites: -Yaa-Xaa-Gly-Gly-|-Xaa- and -Yaa-Xaa-Gly-Xaa-|-Gly- (in which Yaa is Met, Ile or Leu, and Xaa is any amino acid).. Its activity is regulated as follows. Requires DNA and protease cofactor for maximal activation. Inside nascent virions, becomes partially activated by binding to the viral DNA, allowing it to cleave the cofactor that binds to the protease and fully activates it. Actin, like the viral protease cofactor, seems to act as a cofactor in the cleavage of cytokeratin 18 and of actin itself. Functionally, cleaves viral precursor proteins (pTP, pIIIa, pVI, pVII, pVIII, and pX) inside newly assembled particles giving rise to mature virions. Protease complexed to its cofactor slides along the viral DNA to specifically locate and cleave the viral precursors. Mature virions have a weakened organization compared to the unmature virions, thereby facilitating subsequent uncoating. Without maturation, the particle lacks infectivity and is unable to uncoat. Late in adenovirus infection, in the cytoplasm, may participate in the cytoskeleton destruction. Cleaves host cell cytoskeletal keratins K7 and K18. This is Protease from Pantherophis guttatus (Corn snake).